The chain runs to 213 residues: Large ribosomal subunit protein uL3 (213 aa).

The protein belongs to the universal ribosomal protein uL3 family. Part of the 50S ribosomal subunit. Forms a cluster with proteins L14 and L19.

Functionally, one of the primary rRNA binding proteins, it binds directly near the 3'-end of the 23S rRNA, where it nucleates assembly of the 50S subunit. This is Large ribosomal subunit protein uL3 from Kosmotoga olearia (strain ATCC BAA-1733 / DSM 21960 / TBF 19.5.1).